The sequence spans 869 residues: TATA box-binding protein-associated factor RNA polymerase I subunit C (869 aa).

Disordered regions lie at residues 605–629 (SSLR…ASWT) and 729–869 (GAAW…RMGF). Thr-834 bears the Phosphothreonine mark. The span at 835 to 860 (PPHSQASSVRATRSQQHTPVLSSSQP) shows a compositional bias: polar residues. The residue at position 848 (Ser-848) is a Phosphoserine.

In terms of assembly, component of the transcription factor SL1/TIF-IB complex, composed of TBP and at least TAF1A, TAF1B, TAF1C and TAF1D. In the complex interacts directly with TBP, TAF1A and TAF1B. Interaction of the SL1/TIF-IB subunits with TBP excludes interaction of TBP with the transcription factor IID (TFIID) subunits. Interacts with MYC and RRN3. Interacts with p53/TP53; the interaction prevents the association of SL1/TIF-IB with UBTF and represses RNA polymerase I transcription. Part of Pol I pre-initiation complex (PIC), in which Pol I core assembles with RRN3 and promoter-bound UTBF and SL1/TIF-IB complex.

It localises to the nucleus. It is found in the nucleolus. Its function is as follows. Component of the transcription factor SL1/TIF-IB complex, which is involved in the assembly of the PIC (pre-initiation complex) during RNA polymerase I-dependent transcription. The rate of PIC formation probably is primarily dependent on the rate of association of SL1/TIF-IB with the rDNA promoter. SL1/TIF-IB is involved in stabilization of nucleolar transcription factor 1/UBTF on rDNA. Formation of SL1/TIF-IB excludes the association of TBP with TFIID subunits. Recruits RNA polymerase I to the rRNA gene promoter via interaction with RRN3. In Homo sapiens (Human), this protein is TATA box-binding protein-associated factor RNA polymerase I subunit C (TAF1C).